The following is a 150-amino-acid chain: 3-dehydroquinate dehydratase (150 aa).

The Proton acceptor role is filled by tyrosine 26. Substrate-binding residues include asparagine 77, histidine 83, and aspartate 90. Residue histidine 103 is the Proton donor of the active site. Substrate-binding positions include 104 to 105 (LS) and arginine 114.

Belongs to the type-II 3-dehydroquinase family. Homododecamer.

It carries out the reaction 3-dehydroquinate = 3-dehydroshikimate + H2O. It participates in metabolic intermediate biosynthesis; chorismate biosynthesis; chorismate from D-erythrose 4-phosphate and phosphoenolpyruvate: step 3/7. In terms of biological role, catalyzes a trans-dehydration via an enolate intermediate. The sequence is that of 3-dehydroquinate dehydratase from Vibrio cholerae serotype O1 (strain ATCC 39541 / Classical Ogawa 395 / O395).